Consider the following 135-residue polypeptide: L-ectoine synthase (135 aa).

Belongs to the ectoine synthase family.

It carries out the reaction (2S)-4-acetamido-2-aminobutanoate = L-ectoine + H2O. It functions in the pathway amine and polyamine biosynthesis; ectoine biosynthesis; L-ectoine from L-aspartate 4-semialdehyde: step 3/3. Functionally, catalyzes the circularization of gamma-N-acetyl-alpha,gamma-diaminobutyric acid (ADABA) to ectoine (1,4,5,6-tetrahydro-2-methyl-4-pyrimidine carboxylic acid), which is an excellent osmoprotectant. In Saccharopolyspora erythraea (strain ATCC 11635 / DSM 40517 / JCM 4748 / NBRC 13426 / NCIMB 8594 / NRRL 2338), this protein is L-ectoine synthase.